The primary structure comprises 387 residues: Eukaryotic translation initiation factor 3 subunit M (387 aa).

A PCI domain is found at 181–340 (LSSKVMIELL…RKVHISSTMH (160 aa)).

The protein belongs to the eIF-3 subunit M family. As to quaternary structure, component of the eukaryotic translation initiation factor 3 (eIF-3) complex. The eIF-3 complex interacts with pix.

Its subcellular location is the cytoplasm. It is found in the golgi apparatus. Component of the eukaryotic translation initiation factor 3 (eIF-3) complex, which is involved in protein synthesis of a specialized repertoire of mRNAs and, together with other initiation factors, stimulates binding of mRNA and methionyl-tRNAi to the 40S ribosome. The eIF-3 complex specifically targets and initiates translation of a subset of mRNAs involved in cell proliferation. This chain is Eukaryotic translation initiation factor 3 subunit M, found in Drosophila mojavensis (Fruit fly).